The primary structure comprises 463 residues: NADH dehydrogenase [ubiquinone] iron-sulfur protein 2, mitochondrial (463 aa).

The transit peptide at 1–33 (MAALRALGGLRGVAAQVLRPGAGVRLPIQPSRG) directs the protein to the mitochondrion. An N6-acetyllysine modification is found at lysine 62. Arginine 118 carries the symmetric dimethylarginine modification. 3 residues coordinate [4Fe-4S] cluster: cysteine 326, cysteine 332, and cysteine 347.

Belongs to the complex I 49 kDa subunit family. As to quaternary structure, core subunit of respiratory chain NADH dehydrogenase (Complex I) which is composed of 45 different subunits. Component of the iron-sulfur (IP) fragment of the enzyme. Interacts with NDUFAF3. Interacts with NDUFAF7. Interacts with CERS2. [4Fe-4S] cluster is required as a cofactor. Post-translationally, dimethylation at Arg-118 by NDUFAF7 takes place after NDUFS2 assembles into the complex I, leading to stabilize the early intermediate complex.

It localises to the mitochondrion inner membrane. It catalyses the reaction a ubiquinone + NADH + 5 H(+)(in) = a ubiquinol + NAD(+) + 4 H(+)(out). Its function is as follows. Core subunit of the mitochondrial membrane respiratory chain NADH dehydrogenase (Complex I) which catalyzes electron transfer from NADH through the respiratory chain, using ubiquinone as an electron acceptor. Essential for the catalytic activity and assembly of complex I. Redox-sensitive, critical component of the oxygen-sensing pathway in the pulmonary vasculature which plays a key role in acute pulmonary oxygen-sensing and hypoxic pulmonary vasoconstriction. Plays an important role in carotid body sensing of hypoxia. Essential for glia-like neural stem and progenitor cell proliferation, differentiation and subsequent oligodendrocyte or neuronal maturation. The polypeptide is NADH dehydrogenase [ubiquinone] iron-sulfur protein 2, mitochondrial (NDUFS2) (Pongo pygmaeus (Bornean orangutan)).